Consider the following 111-residue polypeptide: Putative single-stranded DNA-binding protein ycf41 (111 aa).

The 98-residue stretch at 1–98 (MNSCTLLVQI…FSTSRIFKYK (98 aa)) folds into the SSB domain.

The protein localises to the plastid. It is found in the chloroplast. The chain is Putative single-stranded DNA-binding protein ycf41 (ycf41) from Pyropia yezoensis (Susabi-nori).